The sequence spans 1078 residues: Nonribosomal peptide synthetase aneB (1078 aa).

The segment at 20-417 (FQQNVLDRPD…HGRKDTQVKI (398 aa)) is adenylation. In terms of domain architecture, Carrier spans 559 to 635 (MPTTPLERQM…TLCQHVSVRP (77 aa)). An O-(pantetheine 4'-phosphoryl)serine modification is found at Ser-596. The segment at 699 to 1013 (NYTLRLDVKL…HEMGYYGPVT (315 aa)) is condensation.

It belongs to the NRP synthetase family.

It carries out the reaction holo-[peptidyl-carrier protein] + L-proline + ATP = L-prolyl-[peptidyl-carrier protein] + AMP + diphosphate. The protein operates within secondary metabolite biosynthesis. In terms of biological role, nonribosomal peptide synthetase; part of the gene cluster that mediates the biosynthesis of aculenes, a unique type of norsesquiterpenes that contain a nordaucane skeleton linked to an L-proline moiety and are of mixed biosynthetic origin. The pathway begins with the synthesis of dauca-4,7-diene by the terpene cyclase aneC using farnesyl pyrophosphate (FPP) as substrate. The cytochrome P450 monooxygenase aneF then performs the initial oxidation at C-12 of dauca-4,7-diene to yield asperaculane D. Asperaculane D is substrate of the cytochrome P450 monooxygenase aneD for C-10 hydroxylation to yield asperaculane E. The cytochrome P450 monooxygenase aneG then converts asperaculane E into aculene D via C-2 oxidation. The monomodular nonribosomal peptide synthase aneB adenylates L-proline and the thiohydrolase aneE transfers this activated L-proline derivative to aculenes D and C to produce respectively aculenes B and A. The dioxygenase aneA converts aculene D into aculene C, and aculene B into aculene A by introducing the 5,6-alkene moiety. Asperculanes A, B, C and F, as well as 14-prolyl asperculane C, might be shunt products of the pathway. In Aspergillus aculeatus (strain ATCC 16872 / CBS 172.66 / WB 5094), this protein is Nonribosomal peptide synthetase aneB.